Reading from the N-terminus, the 143-residue chain is Large ribosomal subunit protein uL13c (143 aa).

It belongs to the universal ribosomal protein uL13 family. Part of the 50S ribosomal subunit.

The protein resides in the plastid. The protein localises to the chloroplast. The sequence is that of Large ribosomal subunit protein uL13c from Gracilaria tenuistipitata var. liui (Red alga).